The primary structure comprises 458 residues: Transmembrane protein 135 (458 aa).

6 helical membrane-spanning segments follow: residues 68–88 (ILQS…FFCI), 96–116 (FYSW…AILI), 149–169 (TLRN…MFFF), 298–318 (FQLG…SCFL), 331–351 (IVAG…TISM), and 377–397 (ADTI…VMEV).

Belongs to the TMEM135 family.

Its subcellular location is the mitochondrion membrane. The protein localises to the peroxisome membrane. Its function is as follows. Involved in mitochondrial metabolism by regulating the balance between mitochondrial fusion and fission. May act as a regulator of mitochondrial fission that promotes DNM1L-dependent fission through activation of DNM1L. May be involved in peroxisome organization. The chain is Transmembrane protein 135 from Mus musculus (Mouse).